The chain runs to 234 residues: Large ribosomal subunit protein eL6 (234 aa).

This sequence belongs to the eukaryotic ribosomal protein eL6 family.

The sequence is that of Large ribosomal subunit protein eL6 (RPL6) from Mesembryanthemum crystallinum (Common ice plant).